Consider the following 156-residue polypeptide: MNDAVKLNSIFTKLSKKKKPKLLGRGIGCGKGKTSGRGHKGQKARSGVSINGFEGGQQSIYTRLPKRGFKPIRKNLYSIFNVGDVQCLMEAKKIVKDSIIDKELLHKLGFIRSVKSKIKLLNKGKLREKFVFHVDFASEAAKRSVASVGGSVEILS.

The tract at residues 25–48 (RGIGCGKGKTSGRGHKGQKARSGV) is disordered. Residues 34-43 (TSGRGHKGQK) show a composition bias toward basic residues.

The protein belongs to the universal ribosomal protein uL15 family. Part of the 50S ribosomal subunit.

Functionally, binds to the 23S rRNA. The chain is Large ribosomal subunit protein uL15 from Wolbachia pipientis subsp. Culex pipiens (strain wPip).